The following is a 193-amino-acid chain: ATP-dependent Clp protease proteolytic subunit 2 (193 aa).

Catalysis depends on S98, which acts as the Nucleophile. H123 is an active-site residue.

Belongs to the peptidase S14 family. In terms of assembly, fourteen ClpP subunits assemble into 2 heptameric rings which stack back to back to give a disk-like structure with a central cavity, resembling the structure of eukaryotic proteasomes.

The protein localises to the cytoplasm. It carries out the reaction Hydrolysis of proteins to small peptides in the presence of ATP and magnesium. alpha-casein is the usual test substrate. In the absence of ATP, only oligopeptides shorter than five residues are hydrolyzed (such as succinyl-Leu-Tyr-|-NHMec, and Leu-Tyr-Leu-|-Tyr-Trp, in which cleavage of the -Tyr-|-Leu- and -Tyr-|-Trp bonds also occurs).. Cleaves peptides in various proteins in a process that requires ATP hydrolysis. Has a chymotrypsin-like activity. Plays a major role in the degradation of misfolded proteins. This is ATP-dependent Clp protease proteolytic subunit 2 from Bacillus anthracis.